Consider the following 228-residue polypeptide: Sec-independent protein translocase protein TatB (228 aa).

A helical membrane pass occupies residues 1–21; that stretch reads MFDFGLGELVFVGIIALIVLG. 2 disordered regions span residues 138-162 and 195-228; these read RSYASAETLGDSGQTGSTAEPAETD and PVPHTTSLRKQAISRKRDLRPKSRAKPKLRVRKS. Basic residues predominate over residues 206-228; that stretch reads AISRKRDLRPKSRAKPKLRVRKS.

Belongs to the TatB family. The Tat system comprises two distinct complexes: a TatABC complex, containing multiple copies of TatA, TatB and TatC subunits, and a separate TatA complex, containing only TatA subunits. Substrates initially bind to the TatABC complex, which probably triggers association of the separate TatA complex to form the active translocon.

The protein resides in the cell inner membrane. In terms of biological role, part of the twin-arginine translocation (Tat) system that transports large folded proteins containing a characteristic twin-arginine motif in their signal peptide across membranes. Together with TatC, TatB is part of a receptor directly interacting with Tat signal peptides. TatB may form an oligomeric binding site that transiently accommodates folded Tat precursor proteins before their translocation. In Neisseria meningitidis serogroup A / serotype 4A (strain DSM 15465 / Z2491), this protein is Sec-independent protein translocase protein TatB.